A 407-amino-acid polypeptide reads, in one-letter code: 4-hydroxy-3-methylbut-2-en-1-yl diphosphate synthase (ferredoxin) (407 aa).

Residues C316, C319, C350, and E357 each contribute to the [4Fe-4S] cluster site.

It belongs to the IspG family. [4Fe-4S] cluster serves as cofactor.

The catalysed reaction is (2E)-4-hydroxy-3-methylbut-2-enyl diphosphate + 2 oxidized [2Fe-2S]-[ferredoxin] + H2O = 2-C-methyl-D-erythritol 2,4-cyclic diphosphate + 2 reduced [2Fe-2S]-[ferredoxin] + H(+). The protein operates within isoprenoid biosynthesis; isopentenyl diphosphate biosynthesis via DXP pathway; isopentenyl diphosphate from 1-deoxy-D-xylulose 5-phosphate: step 5/6. Converts 2C-methyl-D-erythritol 2,4-cyclodiphosphate (ME-2,4cPP) into 1-hydroxy-2-methyl-2-(E)-butenyl 4-diphosphate. The protein is 4-hydroxy-3-methylbut-2-en-1-yl diphosphate synthase (ferredoxin) of Prochlorococcus marinus (strain SARG / CCMP1375 / SS120).